We begin with the raw amino-acid sequence, 100 residues long: Nucleoid-associated protein HPG27_32 (100 aa).

The protein belongs to the YbaB/EbfC family. Homodimer.

Its subcellular location is the cytoplasm. The protein resides in the nucleoid. Functionally, binds to DNA and alters its conformation. May be involved in regulation of gene expression, nucleoid organization and DNA protection. In Helicobacter pylori (strain G27), this protein is Nucleoid-associated protein HPG27_32.